Reading from the N-terminus, the 728-residue chain is Plakophilin-1 (728 aa).

Positions 1–235 (MNHSPLKTAL…SFGHSRASSK (235 aa)) are required for binding to single stranded DNA. Positions 1-287 (MNHSPLKTAL…ESAKQQVYQL (287 aa)) are required for interaction with EIF4A1. Ser4 is modified (phosphoserine; by RIPK4). Positions 48–69 (TVKRQKSKSSQSSTLSHSNRGS) are disordered. 2 phosphorylation in this region is required for cytoplasmic localization and protein stabilization regions span residues 54 to 69 (SKSS…NRGS) and 117 to 192 (RFSS…STCS). At Ser119 the chain carries Phosphoserine. Ser120 is modified (phosphoserine; by RIPK4). Position 122 is a phosphoserine (Ser122). Ser143 is modified (phosphoserine; by RIPK4). Positions 161–270 (YCDPRGTLRK…KYQAIGAYYI (110 aa)) are required for WNT-mediated nuclear localization. ARM repeat units lie at residues 244–275 (SGLT…HTCF), 276–317 (QDES…NLVF), 318–360 (RSTP…NLSS), 361–412 (TDEL…GCLR), 413–443 (NLSS…NCVA), 505–536 (NYDC…LNLM), 537–583 (GKSK…IARL), 584–629 (LQSG…SHTG), and 630–694 (NTSN…DMWA).

It belongs to the beta-catenin family. As to quaternary structure, part of a complex that contains DSG3, PKP1, YAP1 and YWHAG; the complex is required for localization of DSG3 and YAP1 to the cell membrane in keratinocytes. Interacts (via N-terminus) with KRT5/CK5, KRT8/CK8 (via rod domain), KRT15/CK15 and KRT18/CK18 (via rod domain) as part of intermediate filaments. Interacts with VIM (via rod domain). Interacts with DSP. Interacts with DES. Interacts with FXR1; the interaction may facilitate the binding of PKP1 to PKP2, PKP3 and DSP mRNA. Interacts (via N-terminus) with EIF4A1; the interaction promotes EIF4A1 recruitment to the cap-dependent translation complex and EIF4A1 ATPase activity. Interacts with TJP1/ZO-1; the interaction facilitates TJP1/ZO-1 localization to the plasma membrane. Interacts (when phosphorylated) with YWHAG; the interaction results in translocation of PKP1 to the cytoplasm and loss of intercellular adhesion in keratinocytes. Post-translationally, phosphorylated by AKT2; required for interaction with YWHAG and subsequent localization away from desmosomes to the cytoplasm. Phosphorylation of Ser-119 by AKT2 promotes PKP1-driven cap-dependent mRNA translation and decreases intercellular adhesion, phosphorylation is promoted by insulin. Phosphorylation by RIPK4 at the N-terminus is required for its role in differentiation of keratinocytes and DSG1 localization at cell junctions. Expressed in undifferentiated keratinocytes of the epidermis at birth, expression increases as differentiation proceeds (at protein level). Expressed in the cervical loop during early tooth differentiation, expression is then present between ameloblasts, at ameloblast-ameloblast junctions and in the stratum intermedium during pre-secretory and secretory stages of tooth development (at protein level).

Its subcellular location is the nucleus. The protein resides in the cytoplasm. It localises to the perinuclear region. The protein localises to the cell junction. It is found in the desmosome. Its subcellular location is the cell membrane. The protein resides in the stress granule. Functionally, a component of desmosome cell-cell junctions which are required for positive regulation of cellular adhesion. Plays a role in desmosome protein expression regulation and localization to the desmosomal plaque, thereby maintaining cell sheet integrity and anchorage of desmosomes to intermediate filaments. Required for localization of DSG3 and YAP1 to the cell membrane in keratinocytes in response to mechanical strain, via the formation of an interaction complex composed of DSG3, YAP1, PKP1 and YWHAG. Positively regulates differentiation of keratinocytes, potentially via promoting localization of DSG1 at desmosome cell junctions. Required for calcium-independent development and maturation of desmosome plaques specifically at lateral cell-cell contacts in differentiating keratinocytes. Plays a role in the maintenance of DSG3 protein abundance, DSG3 clustering and localization of these clusters to the cell membrane in keratinocytes. May also promote keratinocyte proliferation and morphogenesis during postnatal development. Required for tight junction inside-out transepidermal barrier function of the skin, and is thereby involved in neonatal survival possibly via maintenance of hydration levels. Promotes Wnt-mediated proliferation and differentiation of ameloblasts, via facilitating TJP1/ZO-1 localization to tight junctions. Binds single-stranded DNA (ssDNA), and may thereby play a role in sensing DNA damage and promoting cell survival. Positively regulates cap-dependent translation and as a result cell proliferation, via recruitment of EIF4A1 to the initiation complex and promotion of EIF4A1 ATPase activity. Regulates the mRNA stability and protein abundance of desmosome components PKP2, PKP3, DSC2 and DSP, potentially via its interaction with FXR1. The chain is Plakophilin-1 (Pkp1) from Mus musculus (Mouse).